We begin with the raw amino-acid sequence, 1318 residues long: MSDEASETGQRYNGQPILKRQKPILPYICSTLDFQEERDFLAKSIFPRLNDICSSRGTYFKAVDLRWSAVKAHKSFTSNQFRQYSCLQSQHLKLSLDYVNRCFPFFIGLLGQTYGDFLPDYTPFLLSQVKDFESLSKGKKNLYIAAKNGYPWVLKTPNCSLTEFEIIQAVFRKKSQFQFFYFRTSNSLLRTFNEEEEEEEEKLSSAYLLNEQGKMKVGKLKAKIIGKGLPVRFYRDLEELGDMVWKDWSAVVEKLYPFTTIMGNIDYKHSFENLYHEEFVENCKQVFVTSKESNRTFEILERFAIKDLDLDLDTDSTIAGSGLDSILRINSLPTCKSILLLSGERGCGKSTLIANWVSNFQSKHPGVLMIPYFVGSTCESCDIMSVIHYFVMELQHRANGPRLEMDFLNEDSNVLVFSLLVEVFIAAISLKPCILVLDGIEELIGIYGISGQKAKDFSWLPRSLPPHCKFILSSVSSSLSCKSLCARPDVKIVELNSIGDEDTKFNIFRQHLSPADQERFGQSKPILRKKPNLSPLKLAIIASELQECKIYRNEFQCLREYLEVASVQELWELILKRWVEDYSWTLKPKDTTLDTVIPGPSGWVVDVLCLLCISHCGLAEDELLQLLDTMGYRDHHKVTAVHWAAFRQATKTWIQEKPNGLLYFQHQSLRSAVEHKLLGVSTPVRESNPNVAQNSVNHKKAHFHQVLMRFFQRQTIFWRVYQELPWHMKMSGYWEGLCNFITNPSITDFISKIQNPSLWTRLHLVHYWDVLLEAGNDVSEAFLLSVAKIEGEQFQKLKKRTTLSVLECSLSEITAADKGRIILFIGSFLKLMGKINEAEKLFLSAEDLLLQSPSMTEMLLRAQNAIGELYLEIGMTPKGLTYFQKAWSNLLRFTLSDLKISQELMKQKVKVMNNLAESAPGEFLKENHVLEYATEISKYVTGNPRDHATMKYTEGVLMLASGNAALAKLKFQECLTIRRWLFGNKNILVGEIMEFLADLLFFLLGENEKSQKKQAIEYYKQVIKIKEKADTVATCKLVRKHLSISLSDTLCKLAGQLLSGDFCHHATMEAVSYLYRSLDLRAAHLGPTHASIEGILHLLREIQRSRGRRSWPQSMNHLFPNGSRNGFSLWENVPKLNFHSAQSSDTVNTAMCMNIRRFQRVKSTQPSLVSDKPKYVPGKGKKTLAPILCKSAEEKFQRQASDSQIWNSPRRQPARKKAACPLKTVSLIDKNGLVRLSRQSVSSAELDSRKGLITSICRQPLQRPHNVDNPWKSISELVSEKWLFHTPQYCFTPQKPGFPRRSQIESKLLKTSDDPNKE.

6 TPR repeats span residues 401 to 434 (PRLE…KPCI), 653 to 686 (WIQE…PVRE), 819 to 852 (GRII…LLQS), 860 to 893 (LRAQ…LLRF), 993 to 1029 (MEFL…KEKA), and 1047 to 1084 (SDTL…RAAH). The interval 1295 to 1318 (KPGFPRRSQIESKLLKTSDDPNKE) is disordered. The segment covering 1302–1318 (SQIESKLLKTSDDPNKE) has biased composition (basic and acidic residues).

Highly expressed in lung and myeloid leukemia cell line (at protein level). Isoform 4: expressed in heart (at protein level).

Its subcellular location is the cytoplasm. The protein is Tetratricopeptide repeat protein 41 of Mus musculus (Mouse).